The following is an 88-amino-acid chain: Putative defensin-like protein 256 (88 aa).

Residues M1–A25 form the signal peptide. Cystine bridges form between C30-C46, C36-C53, and C40-C55.

This sequence belongs to the DEFL family.

Its subcellular location is the secreted. This is Putative defensin-like protein 256 from Arabidopsis thaliana (Mouse-ear cress).